The following is an 87-amino-acid chain: Large ribosomal subunit protein eL31 (87 aa).

It belongs to the eukaryotic ribosomal protein eL31 family.

This Methanoculleus marisnigri (strain ATCC 35101 / DSM 1498 / JR1) protein is Large ribosomal subunit protein eL31.